Consider the following 341-residue polypeptide: Phosphate acyltransferase (341 aa).

Belongs to the PlsX family. In terms of assembly, homodimer. Probably interacts with PlsY.

Its subcellular location is the cytoplasm. The enzyme catalyses a fatty acyl-[ACP] + phosphate = an acyl phosphate + holo-[ACP]. The protein operates within lipid metabolism; phospholipid metabolism. Functionally, catalyzes the reversible formation of acyl-phosphate (acyl-PO(4)) from acyl-[acyl-carrier-protein] (acyl-ACP). This enzyme utilizes acyl-ACP as fatty acyl donor, but not acyl-CoA. In Pseudoalteromonas atlantica (strain T6c / ATCC BAA-1087), this protein is Phosphate acyltransferase.